We begin with the raw amino-acid sequence, 304 residues long: tRNA dimethylallyltransferase (304 aa).

Residue 2 to 9 (GPTASGKT) participates in ATP binding. Substrate is bound at residue 4 to 9 (TASGKT). The interaction with substrate tRNA stretch occupies residues 28 to 31 (DSAL).

This sequence belongs to the IPP transferase family. In terms of assembly, monomer. Mg(2+) is required as a cofactor.

It catalyses the reaction adenosine(37) in tRNA + dimethylallyl diphosphate = N(6)-dimethylallyladenosine(37) in tRNA + diphosphate. In terms of biological role, catalyzes the transfer of a dimethylallyl group onto the adenine at position 37 in tRNAs that read codons beginning with uridine, leading to the formation of N6-(dimethylallyl)adenosine (i(6)A). In Blochmanniella pennsylvanica (strain BPEN), this protein is tRNA dimethylallyltransferase.